Here is a 270-residue protein sequence, read N- to C-terminus: Thiazole synthase (270 aa).

The Schiff-base intermediate with DXP role is filled by Lys111. 1-deoxy-D-xylulose 5-phosphate contacts are provided by residues Gly172, 198–199 (AG), and 220–221 (NT).

Belongs to the ThiG family. Homotetramer. Forms heterodimers with either ThiH or ThiS.

The protein resides in the cytoplasm. It catalyses the reaction [ThiS sulfur-carrier protein]-C-terminal-Gly-aminoethanethioate + 2-iminoacetate + 1-deoxy-D-xylulose 5-phosphate = [ThiS sulfur-carrier protein]-C-terminal Gly-Gly + 2-[(2R,5Z)-2-carboxy-4-methylthiazol-5(2H)-ylidene]ethyl phosphate + 2 H2O + H(+). It participates in cofactor biosynthesis; thiamine diphosphate biosynthesis. In terms of biological role, catalyzes the rearrangement of 1-deoxy-D-xylulose 5-phosphate (DXP) to produce the thiazole phosphate moiety of thiamine. Sulfur is provided by the thiocarboxylate moiety of the carrier protein ThiS. In vitro, sulfur can be provided by H(2)S. The polypeptide is Thiazole synthase (Methylococcus capsulatus (strain ATCC 33009 / NCIMB 11132 / Bath)).